Consider the following 92-residue polypeptide: Late cornified envelope protein 3E (92 aa).

Low complexity predominate over residues 1 to 10 (MSCQQNQKQC). Disordered regions lie at residues 1–22 (MSCQ…PKCP) and 64–92 (RRQR…GGCC). Over residues 11–22 (QPPPKCPSPKCP) the composition is skewed to pro residues. The segment covering 76 to 92 (GQQGGGSGCCHGSGGCC) has biased composition (gly residues).

Belongs to the LCE family. Interacts with CYSRT1. As to expression, skin-specific. Expression was readily detected in adult trunk skin, adult arm skin, fetal skin, penal skin, vulva, esophagus and tongue. Not expressed in the cervix, rectum, lung, colon, or placenta.

In terms of biological role, precursors of the cornified envelope of the stratum corneum. In Homo sapiens (Human), this protein is Late cornified envelope protein 3E (LCE3E).